An 85-amino-acid polypeptide reads, in one-letter code: Beta-insect depressant toxin BmKITa (85 aa).

The N-terminal stretch at Met1–Ala21 is a signal peptide. In terms of domain architecture, LCN-type CS-alpha/beta spans Asp22–Gly82. Disulfide bonds link Cys31-Cys81, Cys35-Cys56, Cys42-Cys63, and Cys46-Cys65. The residue at position 82 (Gly82) is a Glycine amide.

Expressed by the venom gland.

It localises to the secreted. Functionally, depressant insect beta-toxins cause a transient contraction paralysis followed by a slow flaccid paralysis. They bind voltage-independently at site-4 of sodium channels (Nav) and shift the voltage of activation toward more negative potentials thereby affecting sodium channel activation and promoting spontaneous and repetitive firing. This toxin also displays an evident analgesic effect but is devoid of any toxicity on mice. In Olivierus martensii (Manchurian scorpion), this protein is Beta-insect depressant toxin BmKITa.